The sequence spans 359 residues: sn-1 acyl-lipid omega-3 desaturase (ferredoxin) (359 aa).

2 helical membrane-spanning segments follow: residues 44 to 64 and 67 to 87; these read LGYF…AAYL and WFFY…LFVV. A Histidine box-1 motif is present at residues 89 to 93; it reads HDCGH. The short motif at 125–129 is the Histidine box-2 element; that stretch reads HRTHH. The next 3 helical transmembrane spans lie at 153–173, 206–226, and 228–248; these read AWYE…IYLF, LAAF…LFLL, and FYVA…FLHH. A Histidine box-3 motif is present at residues 291–295; it reads HHIFS.

The protein belongs to the fatty acid desaturase type 2 family. It depends on Fe(2+) as a cofactor.

The protein localises to the membrane. It carries out the reaction a 1-[(9Z,12Z)-octadecdienoyl]-2-acyl-glycerolipid + 2 reduced [2Fe-2S]-[ferredoxin] + O2 + 2 H(+) = a 1-[(9Z,12Z,15Z)-octadectrienoyl]-2-acyl-glycerolipid + 2 oxidized [2Fe-2S]-[ferredoxin] + 2 H2O. It catalyses the reaction a 1-[(6Z,9Z,12Z)-octadectrienoyl]-2-acyl-glycerolipid + 2 reduced [2Fe-2S]-[ferredoxin] + O2 + 2 H(+) = a 1-[(6Z,9Z,12Z,15Z)-octadectetraenoyl]-2-acyl-glycerolipid + 2 oxidized [2Fe-2S]-[ferredoxin] + 2 H2O. Its pathway is lipid metabolism; polyunsaturated fatty acid biosynthesis. Desaturase involved in fatty acid biosynthesis. Introduces a double bond at carbon 15 of linoleoyl and gamma-linolenoyl groups attached to the sn-1 position of the glycerol moiety of membrane glycerolipids. This Synechocystis sp. (strain ATCC 27184 / PCC 6803 / Kazusa) protein is sn-1 acyl-lipid omega-3 desaturase (ferredoxin).